A 412-amino-acid chain; its full sequence is MTPSISWGLLLLAGLCCLVPSFLAEDVQETDTSQKDQSPASHEIATNLGDFAISLYRELVHQSNTSNIFFSPVSIATAFAMLSLGSKGDTHTQILEGLQFNLTQTSEADIHKSFQHLLQTLNRPDSELQLSTGNGLFVNNDLKLVEKFLEEAKNHYQAEVFSVNFAESEEAKKVINDFVEKGTQGKIVEAVKKLDQDTVFALANYILFKGKWKKPFDPENTEEAEFHVDESTTVKVPMMTLSGMLDVHHCSTLSSWVLLMDYAGNATAVFLLPDDGKMQHLEQTLSKELISKFLLNRRRRLAQIHFPRLSISGEYNLKTLMSPLGITRIFNNGADLSGITEENAPLKLSQAVHKAVLTIDETGTEAAAVTVLLAVPYSMPPILRFDHPFLFIIFEEHTQSPLFVGKVVDPTH.

The signal sequence occupies residues 1–24 (MTPSISWGLLLLAGLCCLVPSFLA). N-linked (GlcNAc...) asparagine glycans are attached at residues Asn-64, Asn-101, and Asn-265. Residues 368–387 (AVTVLLAVPYSMPPILRFDH) are RCL.

It belongs to the serpin family.

Its subcellular location is the secreted. Inhibitor of serine proteases. Can inhibit trypsin and chymotrypsin; relatively ineffective against elastase. The protein is Alpha-1-antitrypsin 1-3 (Serpina1c) of Mus musculus (Mouse).